A 726-amino-acid polypeptide reads, in one-letter code: Long-chain-alcohol oxidase FAO4A (726 aa).

Residues 103–119 traverse the membrane as a helical segment; it reads ILLNWSSSYFSLLRMLF. 224–239 contacts FAD; the sequence is CDAVVVGSGSGGGVAA. Histidine 659 functions as the Proton acceptor in the catalytic mechanism.

This sequence belongs to the GMC oxidoreductase family.

The protein localises to the membrane. It carries out the reaction a long-chain primary fatty alcohol + O2 = a long-chain fatty aldehyde + H2O2. In terms of biological role, long-chain fatty alcohol oxidase involved in the omega-oxidation pathway of lipid degradation. This chain is Long-chain-alcohol oxidase FAO4A (FAO4A), found in Arabidopsis thaliana (Mouse-ear cress).